We begin with the raw amino-acid sequence, 212 residues long: 3,4-dihydroxy-2-butanone 4-phosphate synthase (212 aa).

D-ribulose 5-phosphate contacts are provided by residues 37 to 38, D42, 150 to 154, and E174; these read RE and RRGHT. E38 lines the Mg(2+) pocket. H153 contacts Mg(2+).

It belongs to the DHBP synthase family. In terms of assembly, homodimer. It depends on Mg(2+) as a cofactor. Mn(2+) is required as a cofactor.

It carries out the reaction D-ribulose 5-phosphate = (2S)-2-hydroxy-3-oxobutyl phosphate + formate + H(+). It participates in cofactor biosynthesis; riboflavin biosynthesis; 2-hydroxy-3-oxobutyl phosphate from D-ribulose 5-phosphate: step 1/1. Catalyzes the conversion of D-ribulose 5-phosphate to formate and 3,4-dihydroxy-2-butanone 4-phosphate. The chain is 3,4-dihydroxy-2-butanone 4-phosphate synthase from Histophilus somni (strain 129Pt) (Haemophilus somnus).